Reading from the N-terminus, the 88-residue chain is Small ribosomal subunit protein bS20 (88 aa).

Belongs to the bacterial ribosomal protein bS20 family.

Functionally, binds directly to 16S ribosomal RNA. The polypeptide is Small ribosomal subunit protein bS20 (Clostridium acetobutylicum (strain ATCC 824 / DSM 792 / JCM 1419 / IAM 19013 / LMG 5710 / NBRC 13948 / NRRL B-527 / VKM B-1787 / 2291 / W)).